A 158-amino-acid polypeptide reads, in one-letter code: Transcription elongation factor GreA (158 aa).

A coiled-coil region spans residues Leu14 to Lys76.

It belongs to the GreA/GreB family.

In terms of biological role, necessary for efficient RNA polymerase transcription elongation past template-encoded arresting sites. The arresting sites in DNA have the property of trapping a certain fraction of elongating RNA polymerases that pass through, resulting in locked ternary complexes. Cleavage of the nascent transcript by cleavage factors such as GreA or GreB allows the resumption of elongation from the new 3'terminus. GreA releases sequences of 2 to 3 nucleotides. This Acholeplasma laidlawii (strain PG-8A) protein is Transcription elongation factor GreA.